A 737-amino-acid polypeptide reads, in one-letter code: Relaxin receptor 2 (737 aa).

Topologically, residues 1–399 (MFPLLHFIVL…SSFEDLLANN (399 aa)) are extracellular. The 38-residue stretch at 27–64 (LCQKGYFPCGNLTKCLPRAFHCDGVDDCGNGADEDNCG) folds into the LDL-receptor class A domain. Intrachain disulfides connect Cys28-Cys41, Cys35-Cys54, and Cys48-Cys63. N-linked (GlcNAc...) asparagine glycosylation occurs at Asn37. N-linked (GlcNAc...) asparagine glycosylation is present at Asn121. LRR repeat units lie at residues 121–142 (NTTLLSLKKNKIHSLPDKVFTK), 145–166 (QLKQIFLQHNCITHISRKAFFG), 169–190 (NLQILYLSHNCITTLRPGVFKD), 193–214 (QLTWLILDDNPITRISQQLFTG), 217–238 (SLFFLSMVNNYLEALPKQMCAQ), 241–262 (QLNWMDLEGNGIKYLTNSSFLS), 265–286 (SLTVLFLPRNQIDFVPEKTFSS), 289–310 (NLGELDLSSNMIMELPPEIFKD), 313–334 (LLQKLNLSSNPLLYLHKNQFES), and 337–358 (QLQSLDLERIEIPNINTRMFQP). N-linked (GlcNAc...) asparagine glycosylation is present at Asn257. A glycan (N-linked (GlcNAc...) asparagine) is linked at Asn318. N-linked (GlcNAc...) asparagine glycosylation occurs at Asn361. The helical transmembrane segment at 400–420 (ILRIFVWVIAFITCFGNLFVI) threads the bilayer. Over 421–438 (GMRSFIKAENTTHATSIK) the chain is Cytoplasmic. The chain crosses the membrane as a helical span at residues 439–459 (ILCCADCLMGVYLFFIGFFDI). Topologically, residues 460 to 478 (KYRGQYQKYALLWMESLQC) are extracellular. Cysteines 478 and 556 form a disulfide. A helical membrane pass occupies residues 479 to 501 (RLMGFLAMLSTEVSVLLLTYLTL). Residues 502 to 520 (EKFLAIVFPFSNIRPGKWQ) are Cytoplasmic-facing. A helical transmembrane segment spans residues 521 to 541 (TMVILICIWIVGFLIAVIPFW). The Extracellular segment spans residues 542–575 (KEDYFGNFYGKNGVCFPLYYDQTEDIGSKGYSLG). Residues 576–596 (IFLGVNLLAFLIIVFSYTIMF) traverse the membrane as a helical segment. The Cytoplasmic segment spans residues 597–622 (CSIKKTALQTSEVRNPIGREVAVANR). A helical membrane pass occupies residues 623–643 (FFFIVFSDAICWIPVFVIKIL). At 644–653 (SLFRVEIPGT) the chain is on the extracellular side. Residues 654-674 (ITSWIVIFFLPVNSALNPILY) form a helical membrane-spanning segment. Over 675–737 (TLTTSFFKDK…LGDSIVKPIS (63 aa)) the chain is Cytoplasmic.

This sequence belongs to the G-protein coupled receptor 1 family.

The protein resides in the cell membrane. Its function is as follows. Receptor for relaxin. The activity of this receptor is mediated by G proteins leading to stimulation of adenylate cyclase and an increase of cAMP. May also be a receptor for Leydig insulin-like peptide (INSL3). This Canis lupus familiaris (Dog) protein is Relaxin receptor 2 (RXFP2).